The sequence spans 188 residues: dCTP deaminase (188 aa).

DCTP is bound by residues 111-116 (KSTYAR), 135-137 (TLE), Q156, Y170, and Q180. E137 serves as the catalytic Proton donor/acceptor.

The protein belongs to the dCTP deaminase family. Homotrimer.

It catalyses the reaction dCTP + H2O + H(+) = dUTP + NH4(+). Its pathway is pyrimidine metabolism; dUMP biosynthesis; dUMP from dCTP (dUTP route): step 1/2. Catalyzes the deamination of dCTP to dUTP. This is dCTP deaminase from Pseudomonas putida (strain ATCC 700007 / DSM 6899 / JCM 31910 / BCRC 17059 / LMG 24140 / F1).